We begin with the raw amino-acid sequence, 419 residues long: Gustatory receptor for bitter taste 93a (419 aa).

Over 1–55 (MFSSSSAMTGKRAESWSRLLLLWLYRCARGLLVLSSSLDRDKLQLKATKQGSRNR) the chain is Cytoplasmic. The chain crosses the membrane as a helical span at residues 56–76 (FLHILWRCIVVMIYAGLWPML). At 77-90 (TSAVIGKRLESYAD) the chain is on the extracellular side. Residues 91 to 111 (VLALAQSMSVSILAVISFVIQ) form a helical membrane-spanning segment. At 112–145 (ARGENQFREVLNRYLALYQRICLTTRLRHLFPTK) the chain is on the cytoplasmic side. The helical transmembrane segment at 146–166 (FVVFFLLKLFFTLCGCFHEII) threads the bilayer. The Extracellular segment spans residues 167–184 (PLFENSHFDDISQMVGTG). Residues 185–205 (FGIYMWLGTLCVLDACFLGFL) form a helical membrane-spanning segment. Residues 206–277 (VSGILYEHMA…NSFRRILQWQ (72 aa)) lie on the Cytoplasmic side of the membrane. The chain crosses the membrane as a helical span at residues 278 to 298 (ILFYIYLNFINICLMLYQYIL). Residues 299 to 305 (HFLNDDE) are Extracellular-facing. A helical membrane pass occupies residues 306 to 326 (VVFVSIVMAFVKLANLVLLMM). The Cytoplasmic portion of the chain corresponds to 327 to 383 (CADYTVRQSEVPKKLPLDIVCSDMDERWDKSVETFLGQLQTQRLEIKVLGFFHLNNE). The helical transmembrane segment at 384–404 (FILLILSAIISYLFILIQFGI) threads the bilayer. At 405–419 (TGGFEASEDIKNRFD) the chain is on the extracellular side.

This sequence belongs to the insect chemoreceptor superfamily. Gustatory receptor (GR) family. Gr93a subfamily. In larvae, is expressed in neurons of the dorsal pharyngeal sense organs.

It is found in the cell membrane. Its function is as follows. Gustatory receptor required for response to the bitter in taste neurons. Gr93a cells respond to bitter compounds such as caffeine. Flies avoid bitter substances, suggesting that Gr93a neuron activity is sufficient to mediate avoidance behavior. The chain is Gustatory receptor for bitter taste 93a (Gr93a) from Drosophila melanogaster (Fruit fly).